The primary structure comprises 276 residues: Small ribosomal subunit protein uS3 (276 aa).

In terms of domain architecture, KH type-2 spans 39–110; it reads IRRETMKFLK…KINIKIKEIK (72 aa).

It belongs to the universal ribosomal protein uS3 family. As to quaternary structure, part of the 30S ribosomal subunit. Forms a tight complex with proteins S10 and S14.

In terms of biological role, binds the lower part of the 30S subunit head. Binds mRNA in the 70S ribosome, positioning it for translation. This chain is Small ribosomal subunit protein uS3, found in Borrelia recurrentis (strain A1).